Consider the following 512-residue polypeptide: MLSKIMASKSQSVCSFKKYKNFFMNNVRLLRESILLNTNHDVVTEQKCHKSDQNPKRSRAKIQKRYNSEKKHACCVSNLHLTCVEVSLSSSSPSQSDPRTVDNDSSVARKKRVTAYLQQVECDEDFFKDLRLPTKHSETDKWTLVYVPRVFSDCDSYCARPRKRLLGAGSYGEAYLTDRGVTKKVFSNSEILAEAYMLANIIQVEGWEIHAAHLRIANSICFRHNTVSYTFYKTDLYHFNAHSVDALENYRYTFRQLCDAICFLNLRCKLVHADVSASNILINTDEEYILHAVLGDYSLCSRHDRERAIIIMNENNGKSLGVCQSDLQVEGTYQIVYRPLHLMFWCVTMRTLSIWQLCREAREFCVMDLCALGRVATLFTLHLISHETSVSVRRGLFSVHKKYEKEKTANGHKVEYGIHVILNSLWIVTCLCPTFYKQSGISMMTKLIEAFPQHEKCLNTYTKWLGEELPFRGVGIILENKYGQELLDFISKTSGVDDFRKPLGPIFETLTV.

Residue D274 is the Proton acceptor of the active site.

The protein belongs to the protein kinase superfamily. Tyr protein kinase family.

It carries out the reaction L-tyrosyl-[protein] + ATP = O-phospho-L-tyrosyl-[protein] + ADP + H(+). The chain is Phosphotransferase UL97 homolog from Elephantid herpesvirus 1 (isolate Asian elephant/Berlin/Kiba/1998) (EIHV-1).